Here is a 145-residue protein sequence, read N- to C-terminus: D-aminoacyl-tRNA deacylase (145 aa).

Residues 137–138 (GP) carry the Gly-cisPro motif, important for rejection of L-amino acids motif.

The protein belongs to the DTD family. Homodimer.

It localises to the cytoplasm. It catalyses the reaction glycyl-tRNA(Ala) + H2O = tRNA(Ala) + glycine + H(+). The catalysed reaction is a D-aminoacyl-tRNA + H2O = a tRNA + a D-alpha-amino acid + H(+). Functionally, an aminoacyl-tRNA editing enzyme that deacylates mischarged D-aminoacyl-tRNAs. Also deacylates mischarged glycyl-tRNA(Ala), protecting cells against glycine mischarging by AlaRS. Acts via tRNA-based rather than protein-based catalysis; rejects L-amino acids rather than detecting D-amino acids in the active site. By recycling D-aminoacyl-tRNA to D-amino acids and free tRNA molecules, this enzyme counteracts the toxicity associated with the formation of D-aminoacyl-tRNA entities in vivo and helps enforce protein L-homochirality. This is D-aminoacyl-tRNA deacylase from Pelobacter propionicus (strain DSM 2379 / NBRC 103807 / OttBd1).